The sequence spans 1301 residues: DNA-directed RNA polymerase subunit beta (1301 aa).

It belongs to the RNA polymerase beta chain family. As to quaternary structure, the RNAP catalytic core consists of 2 alpha, 1 beta, 1 beta' and 1 omega subunit. When a sigma factor is associated with the core the holoenzyme is formed, which can initiate transcription.

The enzyme catalyses RNA(n) + a ribonucleoside 5'-triphosphate = RNA(n+1) + diphosphate. In terms of biological role, DNA-dependent RNA polymerase catalyzes the transcription of DNA into RNA using the four ribonucleoside triphosphates as substrates. This chain is DNA-directed RNA polymerase subunit beta, found in Chlorobium luteolum (strain DSM 273 / BCRC 81028 / 2530) (Pelodictyon luteolum).